We begin with the raw amino-acid sequence, 252 residues long: Fluoroquinolones export permease protein MT2760 (252 aa).

6 helical membrane passes run 31–51 (VMLV…TPLF), 69–89 (LILT…LAAF), 119–139 (ATVM…SGIL), 148–168 (IPIG…ILAV), 176–196 (LAMV…PWFI), and 224–244 (TWWP…WVLF).

As to quaternary structure, the complex is composed of 2 ATP-binding proteins and 2 transmembrane proteins.

It localises to the cell membrane. Functionally, part of the ABC transporter complex involved in fluoroquinolones export. Probably responsible for the translocation of the substrate across the membrane. The sequence is that of Fluoroquinolones export permease protein MT2760 from Mycobacterium tuberculosis (strain CDC 1551 / Oshkosh).